Consider the following 648-residue polypeptide: TBC1 domain family member 17 (648 aa).

Residues Asp218–Gly309 are required for interaction with OPTN. The tract at residues Pro240–Pro259 is disordered. One can recognise a Rab-GAP TBC domain in the interval Gly310 to Leu520. Residues Leu594 to Ser648 form a disordered region. A compositionally biased stretch (pro residues) spans Pro597–Ser624. Phosphoserine is present on residues Ser602 and Ser604. Thr606 carries the phosphothreonine modification. At Ser608 the chain carries Phosphoserine. At Thr615 the chain carries Phosphothreonine. Residues Thr625 to Ser634 are compositionally biased toward low complexity. Residues Leu638–Ser648 show a composition bias toward acidic residues.

As to quaternary structure, interacts with OPTN; this interaction mediates TBC1D17 transient association with Rab8.

It localises to the cytoplasmic vesicle. The protein resides in the autophagosome. It is found in the cytoplasm. Its subcellular location is the recycling endosome. Functionally, probable RAB GTPase-activating protein that inhibits RAB8A/B function. Reduces Rab8 recruitment to tubules emanating from the endocytic recycling compartment (ERC) and inhibits Rab8-mediated endocytic trafficking, such as that of transferrin receptor (TfR). Involved in regulation of autophagy. The sequence is that of TBC1 domain family member 17 from Homo sapiens (Human).